Consider the following 628-residue polypeptide: DNA-directed RNA polymerase subunit gamma (628 aa).

Residues cysteine 71, cysteine 73, cysteine 86, and cysteine 89 each coordinate Zn(2+). Residues aspartate 467, aspartate 469, and aspartate 471 each contribute to the Mg(2+) site.

The protein belongs to the RNA polymerase beta' chain family. RpoC1 subfamily. In cyanobacteria the RNAP catalytic core is composed of 2 alpha, 1 beta, 1 beta', 1 gamma and 1 omega subunit. When a sigma factor is associated with the core the holoenzyme is formed, which can initiate transcription. Mg(2+) is required as a cofactor. Requires Zn(2+) as cofactor.

It carries out the reaction RNA(n) + a ribonucleoside 5'-triphosphate = RNA(n+1) + diphosphate. Functionally, DNA-dependent RNA polymerase catalyzes the transcription of DNA into RNA using the four ribonucleoside triphosphates as substrates. The chain is DNA-directed RNA polymerase subunit gamma from Crocosphaera subtropica (strain ATCC 51142 / BH68) (Cyanothece sp. (strain ATCC 51142)).